Reading from the N-terminus, the 58-residue chain is uncharacterized protein (58 aa).

Transmembrane regions (helical) follow at residues isoleucine 5–glutamate 25 and tryptophan 32–isoleucine 52.

It is found in the cell membrane. This is an uncharacterized protein from Methanocaldococcus jannaschii (strain ATCC 43067 / DSM 2661 / JAL-1 / JCM 10045 / NBRC 100440) (Methanococcus jannaschii).